Reading from the N-terminus, the 446-residue chain is MMITLRKLPLAVAVAAGVMSAQAMAVDFHGYARSGIGWTGSGGEQQCFQTTGAQSKYRLGNECETYAELKLGQEVWKEGDKSFYFDTNVAYSVAQQNDWEATDPAFREANVQGKNLIEWLPGSTIWAGKRFYQRHDVHMIDFYYWDISGPGAGLENIDVGFGKLSLAATRSSEAGGSSSFASNNIYDYTNETANDVFDVRLAQMEVNPGGTLELGVDYGRANLRDNYRLVDGASKDGWLFTAEHTQSVLKGFNKFVVQYATDSMTSQGKGLSQGSGVAFDNEKFAYNINNNGHMLRILDHGAISMGDNWDMMYVGMYQDINWDNDNGTKWWTVGIRPMYKWTPIMSTVMEIGYDNVESQRTGDKNNQYKITLAQQWQAGDSIWSRPAIRVFATYAKWDEKWGYDYNGDSKVNPNYGKAVPADFNGGSFGRGDSDEWTFGAQMEIWW.

Residues 1-25 (MMITLRKLPLAVAVAAGVMSAQAMA) form the signal peptide.

Belongs to the porin LamB (TC 1.B.3) family. In terms of assembly, homotrimer formed of three 18-stranded antiparallel beta-barrels, containing three independent channels.

The protein localises to the cell outer membrane. The enzyme catalyses beta-maltose(in) = beta-maltose(out). Involved in the transport of maltose and maltodextrins. This is Maltoporin from Escherichia coli O157:H7 (strain EC4115 / EHEC).